The chain runs to 514 residues: MGVCISHEYSKPTAQETEIQQQFSNFSKVDERPPMAVEHQMYDYRQAYEEQDDELFAIICCPHSIGFDRDKIALIDLDPTSDTYCTIISEIRLTSNGDEPGRMNWAKSAESLIEMDKLIRKNIIVPCMNSGKIYVIGFDKNKFYMEKSKNIFKLQEIRSDELFRKDVSCPYAVRSLPLKGAPVHVSTMGDRYGHGKGDFVLIDRKTWEIRKKSDPTFSSFGGDFSLQPRHNLLISSEWGHPRLFRDGFQPSELENVSESFGSCLHVWQISPPKLLQSIGLDSFDGSLVISVKFLHNTDCNHAFAISAIGSSIFHLHMNTLSREWQADRVAHVPSLKVENWVSDEMPALLTDMIISMDDRWLYVCGFLHGIVWRFDIQDPFRVSLHGKINLGGVFDSSPEVRIKTSNAMEDRWWLPPETRSLPRGTKFRGGPALMQLSKDGSRLYVCNSFYKAWDGQFYPELISDGGQMVRVDIVDNEMRLNKKFLVDMKDQPNGPFVIRDIKFLDGDCTSDSFL.

The protein belongs to the selenium-binding protein family.

The chain is Putative selenium-binding protein from Caenorhabditis briggsae.